The chain runs to 263 residues: Methylesterase 1 (263 aa).

Residue Ser-85 is the Acyl-ester intermediate of the active site. Active-site charge relay system residues include Asp-213 and His-241.

It belongs to the AB hydrolase superfamily. Methylesterase family.

It catalyses the reaction methyl (indol-3-yl)acetate + H2O = (indol-3-yl)acetate + methanol + H(+). It carries out the reaction methyl (-)-jasmonate + H2O = jasmonate + methanol + H(+). The enzyme catalyses methyl salicylate + H2O = salicylate + methanol + H(+). Its pathway is plant hormone biosynthesis. It participates in lipid metabolism; oxylipin biosynthesis. Esterase activity is down-regulated by salicylic acid (SA). Methylesterase shown to have carboxylesterase activity, methyl indole-3-acetic acid (MeIAA) esterase activity, methyl salicylate (MeSA) esterase activity and methyl jasmonate (MeJA) esterase activity in vitro. Required to convert methyl salicylate (MeSA) to salicylic acid (SA) as part of the signal transduction pathways that activate systemic acquired resistance in systemic tissue. MeSA is believed to be an inactive form that needs to be demethylated to exert a biological effect. In Arabidopsis thaliana (Mouse-ear cress), this protein is Methylesterase 1.